The chain runs to 263 residues: Phosphatidylglycerol--prolipoprotein diacylglyceryl transferase (263 aa).

Helical transmembrane passes span 10 to 30 (VAIT…LFGF), 56 to 76 (MVTY…ILFY), 91 to 111 (IWNG…AMWL), and 117 to 137 (GLGF…GLFF). Arg139 contributes to the a 1,2-diacyl-sn-glycero-3-phospho-(1'-sn-glycerol) binding site. 3 helical membrane-spanning segments follow: residues 171–191 (PSQL…LWVF), 199–219 (GHVS…VEFV), and 231–251 (FGWL…GLWL).

It belongs to the Lgt family.

It is found in the cell inner membrane. It catalyses the reaction L-cysteinyl-[prolipoprotein] + a 1,2-diacyl-sn-glycero-3-phospho-(1'-sn-glycerol) = an S-1,2-diacyl-sn-glyceryl-L-cysteinyl-[prolipoprotein] + sn-glycerol 1-phosphate + H(+). It functions in the pathway protein modification; lipoprotein biosynthesis (diacylglyceryl transfer). Catalyzes the transfer of the diacylglyceryl group from phosphatidylglycerol to the sulfhydryl group of the N-terminal cysteine of a prolipoprotein, the first step in the formation of mature lipoproteins. In Nitratidesulfovibrio vulgaris (strain ATCC 29579 / DSM 644 / CCUG 34227 / NCIMB 8303 / VKM B-1760 / Hildenborough) (Desulfovibrio vulgaris), this protein is Phosphatidylglycerol--prolipoprotein diacylglyceryl transferase.